The chain runs to 179 residues: UPF0302 protein BPUM_1989 (179 aa).

It belongs to the UPF0302 family.

In Bacillus pumilus (strain SAFR-032), this protein is UPF0302 protein BPUM_1989.